Here is a 372-residue protein sequence, read N- to C-terminus: D-alanine--D-alanine ligase (372 aa).

The region spanning 145–349 (KTVLRAGGIP…CPNLLDQLIE (205 aa)) is the ATP-grasp domain. Residue 176–231 (DRWGTSELFVKAVSLGSSVATLPVKTETEFTKAVKEVFRYDDRLMVEPRIRGREIE) coordinates ATP. Residues Asp-303, Glu-316, and Asn-318 each coordinate Mg(2+).

Belongs to the D-alanine--D-alanine ligase family. The cofactor is Mg(2+). Mn(2+) is required as a cofactor.

It is found in the cytoplasm. It carries out the reaction 2 D-alanine + ATP = D-alanyl-D-alanine + ADP + phosphate + H(+). The protein operates within cell wall biogenesis; peptidoglycan biosynthesis. Functionally, cell wall formation. This is D-alanine--D-alanine ligase from Coxiella burnetii (strain RSA 331 / Henzerling II).